Reading from the N-terminus, the 251-residue chain is Cell division protein ZapD (251 aa).

Belongs to the ZapD family. In terms of assembly, interacts with FtsZ.

The protein localises to the cytoplasm. Cell division factor that enhances FtsZ-ring assembly. Directly interacts with FtsZ and promotes bundling of FtsZ protofilaments, with a reduction in FtsZ GTPase activity. The protein is Cell division protein ZapD of Paraburkholderia xenovorans (strain LB400).